A 358-amino-acid chain; its full sequence is Protein-arginine kinase (358 aa).

The Phosphagen kinase C-terminal domain maps to isoleucine 24 to alanine 255. ATP contacts are provided by residues serine 27–arginine 31, histidine 92, arginine 126, arginine 177–methionine 181, and arginine 208–glutamate 213. Positions arginine 338–alanine 343 match the RDXXRA motif of the pArg binding pocket involved in allosteric regulation motif.

This sequence belongs to the ATP:guanido phosphotransferase family.

It catalyses the reaction L-arginyl-[protein] + ATP = N(omega)-phospho-L-arginyl-[protein] + ADP + H(+). With respect to regulation, appears to be allosterically activated by the binding of pArg-containing polypeptides to the pArg-binding pocket localized in the C-terminal domain of McsB. Functionally, catalyzes the specific phosphorylation of arginine residues in a large number of proteins. Is part of the bacterial stress response system. Protein arginine phosphorylation has a physiologically important role and is involved in the regulation of many critical cellular processes, such as protein homeostasis, motility, competence, and stringent and stress responses, by regulating gene expression and protein activity. In Shouchella clausii (strain KSM-K16) (Alkalihalobacillus clausii), this protein is Protein-arginine kinase.